A 339-amino-acid polypeptide reads, in one-letter code: GATA transcription factor 5 (339 aa).

Disordered regions lie at residues 68-88 (MVRVSSEEPNDDGDALRRSSD), 126-145 (EYSGPNLTGTPTEKPAWLTG), 163-206 (PVPA…PSSP), and 221-242 (ERPPFPKKHKKRSAESVFSGEL). The span at 126-136 (EYSGPNLTGTP) shows a compositional bias: polar residues. The Nuclear localization signal signature appears at 167-174 (KARSKRNR). A compositionally biased stretch (low complexity) spans 181–206 (SLGSSSSSGPSSSGSTSSSSSGPSSP). Residues 245–299 (LQPQRKCSHCGVQKTPQWRAGPMGAKTLCNACGVRYKSGRLLPEYRPACSPTFSS) form a GATA-type zinc finger. The segment at 314–339 (RKKEPTSDNETGLNQLVQSPQAVPSF) is disordered. Residues 321 to 339 (DNETGLNQLVQSPQAVPSF) are compositionally biased toward polar residues.

This sequence belongs to the type IV zinc-finger family. Class A subfamily.

It is found in the nucleus. Transcriptional activator that specifically binds 5'-GATA-3' or 5'-GAT-3' motifs within gene promoters. May be involved in the regulation of some light-responsive genes. The sequence is that of GATA transcription factor 5 (GATA5) from Arabidopsis thaliana (Mouse-ear cress).